Consider the following 252-residue polypeptide: MSEPNSDHGAGAAVGETRPLYSRVLLKLGGEMFGGGAVGLDPDVVHLVARQIAEVVRSGVQVAVVIGGGNFFRGAQLQQRGMERTRSDYMGMLGTVMNSLALQDFLEKEGIDTRVQTAITMGQVAEPYIPLRAVRHLEKGRVVIFGAGMGLPYFSTDTTAAQRALEIGAEVVLMAKAVDGVYTADPRKDPDAQLLTAITHREVIDRGLAVADATAFSLCMDNGMPILVFNLLVDGNIARAVAGEKIGTLVTT.

K27–G30 lines the ATP pocket. Position 68 (G68) interacts with UMP. ATP is bound by residues G69 and R73. UMP-binding positions include D88 and M149–T156. ATP-binding residues include Y182 and D185.

The protein belongs to the UMP kinase family. In terms of assembly, homohexamer.

The protein resides in the cytoplasm. The catalysed reaction is UMP + ATP = UDP + ADP. It participates in pyrimidine metabolism; CTP biosynthesis via de novo pathway; UDP from UMP (UMPK route): step 1/1. Inhibited by UTP. In terms of biological role, catalyzes the reversible phosphorylation of UMP to UDP. The sequence is that of Uridylate kinase from Mycobacterium sp. (strain JLS).